Reading from the N-terminus, the 241-residue chain is MKIFNYKRVPYAEIRAFSVHILTASGSFLAFLGVVAASEHRFVDMFWWLGLALLVDGIDGPIARKVRVKEVLPNWSGDTLDNIIDYVTYVLLPAFALYQSGMIGEPLSFVAAGMIVVSSAIYYADMGMKTDEYFFSGFPVVWNMVVFTLFVMDASATTAMTVVTVSVFLTFLPINFLHPVRVKRLRPLNLLVVAIWCALGGYALLMHFETPTWAVIAFVASGIYLYCIGGILQFFPSLGAK.

The Cytoplasmic segment spans residues 1–15; it reads MKIFNYKRVPYAEIR. The helical transmembrane segment at 16-36 threads the bilayer; the sequence is AFSVHILTASGSFLAFLGVVA. The Periplasmic segment spans residues 37–41; it reads ASEHR. The helical transmembrane segment at 42 to 62 threads the bilayer; that stretch reads FVDMFWWLGLALLVDGIDGPI. At 63–76 the chain is on the cytoplasmic side; the sequence is ARKVRVKEVLPNWS. A helical membrane pass occupies residues 77 to 97; that stretch reads GDTLDNIIDYVTYVLLPAFAL. Topologically, residues 98–100 are periplasmic; that stretch reads YQS. Residues 101 to 121 traverse the membrane as a helical segment; the sequence is GMIGEPLSFVAAGMIVVSSAI. Residues 122–133 lie on the Cytoplasmic side of the membrane; that stretch reads YYADMGMKTDEY. Residues 134-154 form a helical membrane-spanning segment; sequence FFSGFPVVWNMVVFTLFVMDA. The Periplasmic segment spans residues 155-159; it reads SATTA. The chain crosses the membrane as a helical span at residues 160–180; the sequence is MTVVTVSVFLTFLPINFLHPV. Residues 181–187 lie on the Cytoplasmic side of the membrane; it reads RVKRLRP. The chain crosses the membrane as a helical span at residues 188–208; it reads LNLLVVAIWCALGGYALLMHF. The Periplasmic segment spans residues 209 to 214; the sequence is ETPTWA. The chain crosses the membrane as a helical span at residues 215-235; it reads VIAFVASGIYLYCIGGILQFF. Residues 236 to 241 lie on the Cytoplasmic side of the membrane; sequence PSLGAK.

It belongs to the CDP-alcohol phosphatidyltransferase class-I family. It depends on Mn(2+) as a cofactor.

The protein resides in the cell inner membrane. The catalysed reaction is a CDP-1,2-diacyl-sn-glycerol + choline = a 1,2-diacyl-sn-glycero-3-phosphocholine + CMP + H(+). Condenses choline with CDP-diglyceride to produce phosphatidylcholine and CMP. Affects motility, biofilm formation and virulence of this bacterium when there is a complete loss of phosphatidylcholine formation due to absence of both the synthase (pcs) and the methylation (pmtA) pathways. This chain is Phosphatidylcholine synthase, found in Agrobacterium fabrum (strain C58 / ATCC 33970) (Agrobacterium tumefaciens (strain C58)).